A 274-amino-acid chain; its full sequence is Thiamine kinase (274 aa).

This sequence belongs to the thiamine kinase family.

It carries out the reaction thiamine + ATP = thiamine phosphate + ADP + H(+). Its pathway is cofactor biosynthesis; thiamine diphosphate biosynthesis; thiamine phosphate from thiamine: step 1/1. Catalyzes the ATP-dependent phosphorylation of thiamine to thiamine phosphate. Is involved in thiamine salvage. The polypeptide is Thiamine kinase (Escherichia coli O139:H28 (strain E24377A / ETEC)).